A 707-amino-acid polypeptide reads, in one-letter code: Zinc finger protein 60 (707 aa).

One can recognise a KRAB domain in the interval Val14 to Gln86. 19 C2H2-type zinc fingers span residues Tyr173 to His195, Tyr201 to His223, Phe229 to His251, Phe257 to His282, Tyr288 to His310, Phe316 to His338, Phe344 to His366, Phe372 to His394, Phe400 to His422, Tyr428 to His450, Phe456 to His478, Phe484 to His506, Phe512 to His534, Tyr540 to His562, Phe568 to His590, Tyr596 to His618, Phe624 to His646, Phe652 to His674, and Tyr680 to His702.

This sequence belongs to the krueppel C2H2-type zinc-finger protein family. As to expression, expressed widely and evenly in most adult mouse tissues.

Its subcellular location is the nucleus. Functionally, may have a role during differentiation processes. This Mus musculus (Mouse) protein is Zinc finger protein 60 (Zfp60).